Reading from the N-terminus, the 335-residue chain is tRNA N6-adenosine threonylcarbamoyltransferase (335 aa).

Fe cation contacts are provided by His-110 and His-114. Substrate is bound by residues 132–136 (LVSGG), Asp-165, Gly-178, and Asn-271. Asp-299 is a binding site for Fe cation.

This sequence belongs to the KAE1 / TsaD family. Requires Fe(2+) as cofactor.

It localises to the cytoplasm. The catalysed reaction is L-threonylcarbamoyladenylate + adenosine(37) in tRNA = N(6)-L-threonylcarbamoyladenosine(37) in tRNA + AMP + H(+). Its function is as follows. Required for the formation of a threonylcarbamoyl group on adenosine at position 37 (t(6)A37) in tRNAs that read codons beginning with adenine. Is involved in the transfer of the threonylcarbamoyl moiety of threonylcarbamoyl-AMP (TC-AMP) to the N6 group of A37, together with TsaE and TsaB. TsaD likely plays a direct catalytic role in this reaction. The protein is tRNA N6-adenosine threonylcarbamoyltransferase of Campylobacter jejuni subsp. jejuni serotype O:6 (strain 81116 / NCTC 11828).